A 382-amino-acid polypeptide reads, in one-letter code: Probable protein phosphatase 2C 65 (382 aa).

Residues 47 to 337 form the PPM-type phosphatase domain; that stretch reads HVSMSIKQGK…DDCAVVVLYL (291 aa). Residues aspartate 83 and glycine 84 each coordinate Mn(2+). Positions 107 to 126 are disordered; the sequence is KIRSSKSAGDENIENNSSQS. Residues aspartate 282 and aspartate 328 each coordinate Mn(2+).

The protein belongs to the PP2C family. Requires Mg(2+) as cofactor. The cofactor is Mn(2+).

The enzyme catalyses O-phospho-L-seryl-[protein] + H2O = L-seryl-[protein] + phosphate. It carries out the reaction O-phospho-L-threonyl-[protein] + H2O = L-threonyl-[protein] + phosphate. The polypeptide is Probable protein phosphatase 2C 65 (Arabidopsis thaliana (Mouse-ear cress)).